Consider the following 203-residue polypeptide: Dephospho-CoA kinase (203 aa).

The DPCK domain maps to 3-202 (KIGLTGSIGM…MRIAKGDFRN (200 aa)). 11–16 (GMGKST) is an ATP binding site.

This sequence belongs to the CoaE family.

Its subcellular location is the cytoplasm. The catalysed reaction is 3'-dephospho-CoA + ATP = ADP + CoA + H(+). The protein operates within cofactor biosynthesis; coenzyme A biosynthesis; CoA from (R)-pantothenate: step 5/5. Catalyzes the phosphorylation of the 3'-hydroxyl group of dephosphocoenzyme A to form coenzyme A. The sequence is that of Dephospho-CoA kinase from Rhizobium etli (strain ATCC 51251 / DSM 11541 / JCM 21823 / NBRC 15573 / CFN 42).